Consider the following 62-residue polypeptide: Large ribosomal subunit protein bL28 (62 aa).

Belongs to the bacterial ribosomal protein bL28 family.

This is Large ribosomal subunit protein bL28 from Caldanaerobacter subterraneus subsp. tengcongensis (strain DSM 15242 / JCM 11007 / NBRC 100824 / MB4) (Thermoanaerobacter tengcongensis).